A 646-amino-acid chain; its full sequence is Serine/threonine-protein kinase PLK3 (646 aa).

The disordered stretch occupies residues 1-35; it reads MEPAAGFLSPRPFQRAAAAPAPPAGPGPPPSALRG. Positions 10–19 are enriched in low complexity; sequence PRPFQRAAAA. A compositionally biased stretch (pro residues) spans 20 to 31; that stretch reads PAPPAGPGPPPS. The Protein kinase domain occupies 62 to 314; the sequence is YLKGRLLGKG…IDQILRHDFF (253 aa). ATP-binding positions include 68-76 and lysine 91; that span reads LGKGGFARC. Aspartate 185 functions as the Proton acceptor in the catalytic mechanism. The segment at 381-417 is disordered; the sequence is GHQDARPEAPAASGPAPVSLVETAPEDSSPRGTLASS. 2 POLO box domains span residues 463-541 and 562-645; these read WVSK…YMEQ and LLLQ…DRSP.

Belongs to the protein kinase superfamily. Ser/Thr protein kinase family. CDC5/Polo subfamily. In terms of assembly, interacts (via the POLO-box domain) with CIB1; leading to inhibit PLK3 kinase activity. Interacts with GOLGB1. Post-translationally, phosphorylated in an ATM-dependent manner following DNA damage. Phosphorylated as cells enter mitosis and dephosphorylated as cells exit mitosis. In terms of tissue distribution, transcripts are highly detected in placenta, lung, followed by skeletal muscle, heart, pancreas, ovaries and kidney and weakly detected in liver and brain. May have a short half-live. In cells of hematopoietic origin, strongly and exclusively detected in terminally differentiated macrophages. Transcript expression appears to be down-regulated in primary lung tumor.

It is found in the cytoplasm. The protein resides in the nucleus. Its subcellular location is the nucleolus. It localises to the golgi apparatus. The protein localises to the cytoskeleton. It is found in the microtubule organizing center. The protein resides in the centrosome. The catalysed reaction is L-seryl-[protein] + ATP = O-phospho-L-seryl-[protein] + ADP + H(+). The enzyme catalyses L-threonyl-[protein] + ATP = O-phospho-L-threonyl-[protein] + ADP + H(+). Serine/threonine-protein kinase involved in cell cycle regulation, response to stress and Golgi disassembly. Polo-like kinases act by binding and phosphorylating proteins that are already phosphorylated on a specific motif recognized by the POLO box domains. Phosphorylates ATF2, BCL2L1, CDC25A, CDC25C, CHEK2, HIF1A, JUN, p53/TP53, p73/TP73, PTEN, TOP2A and VRK1. Involved in cell cycle regulation: required for entry into S phase and cytokinesis. Phosphorylates BCL2L1, leading to regulate the G2 checkpoint and progression to cytokinesis during mitosis. Plays a key role in response to stress: rapidly activated upon stress stimulation, such as ionizing radiation, reactive oxygen species (ROS), hyperosmotic stress, UV irradiation and hypoxia. Involved in DNA damage response and G1/S transition checkpoint by phosphorylating CDC25A, p53/TP53 and p73/TP73. Phosphorylates p53/TP53 in response to reactive oxygen species (ROS), thereby promoting p53/TP53-mediated apoptosis. Phosphorylates CHEK2 in response to DNA damage, promoting the G2/M transition checkpoint. Phosphorylates the transcription factor p73/TP73 in response to DNA damage, leading to inhibit p73/TP73-mediated transcriptional activation and pro-apoptotic functions. Phosphorylates HIF1A and JUN is response to hypoxia. Phosphorylates ATF2 following hyperosmotic stress in corneal epithelium. Also involved in Golgi disassembly during the cell cycle: part of a MEK1/MAP2K1-dependent pathway that induces Golgi fragmentation during mitosis by mediating phosphorylation of VRK1. May participate in endomitotic cell cycle, a form of mitosis in which both karyokinesis and cytokinesis are interrupted and is a hallmark of megakaryocyte differentiation, via its interaction with CIB1. This Homo sapiens (Human) protein is Serine/threonine-protein kinase PLK3 (PLK3).